The sequence spans 513 residues: MQLNPSEISELIKSKIEGLSVTSEFRTQGTIVSLTDGIVRVHGLSDVMQGEMLEFPGGTYGLALNLERDSVGAVILGAYEHLTEGDIVKCTGRVLEVPVGEALLGRVVNALGQPIDGKGPVAAQGMEPIEKIAPGVISRKSVDQPMQTGLKSVDSMVPIGRGQRELIIGDRQTGKTAVAIDAIINQKGEDMICIYVAIGQKASSIANVVRKLEEVGAMAYTIVVVASASESAAMQYIAPYSGCTMGEYFRDKGQDALIVYDDLTKQAWAYRQISLLLRRPPGREAYPGDVFYLHSRLLERAARVNADYVEKATGGKVKGKTGSLTALPIIETQAGDVTAFVPTNVISITDGQIFLESDLFNAGIRPAINAGVSVSRVGGAAQTKVIKKLGGGIRLALAQYRELAAFAQFASDLDEATRKQLERGKMATELMKQAQYATLKVSEMALTLFALNKGYFDDVDIKRALAFESALKSHVRSHHAAILDKIETTKELDAETEKALEAAIQEFKQNGIY.

ATP is bound at residue 169 to 176; that stretch reads GDRQTGKT.

Belongs to the ATPase alpha/beta chains family. F-type ATPases have 2 components, CF(1) - the catalytic core - and CF(0) - the membrane proton channel. CF(1) has five subunits: alpha(3), beta(3), gamma(1), delta(1), epsilon(1). CF(0) has three main subunits: a(1), b(2) and c(9-12). The alpha and beta chains form an alternating ring which encloses part of the gamma chain. CF(1) is attached to CF(0) by a central stalk formed by the gamma and epsilon chains, while a peripheral stalk is formed by the delta and b chains.

The protein localises to the cell inner membrane. It carries out the reaction ATP + H2O + 4 H(+)(in) = ADP + phosphate + 5 H(+)(out). In terms of biological role, produces ATP from ADP in the presence of a proton gradient across the membrane. The alpha chain is a regulatory subunit. This chain is ATP synthase subunit alpha 1, found in Nitrosomonas eutropha (strain DSM 101675 / C91 / Nm57).